We begin with the raw amino-acid sequence, 803 residues long: Protein translocase subunit SecA (803 aa).

ATP contacts are provided by residues Gln-100, 118–122 (GEGKT), and Asp-508.

This sequence belongs to the SecA family. In terms of assembly, monomer and homodimer. Part of the essential Sec protein translocation apparatus which comprises SecA, SecYEG and auxiliary proteins SecDF. Other proteins may also be involved.

It localises to the cell membrane. It is found in the cytoplasm. The catalysed reaction is ATP + H2O + cellular proteinSide 1 = ADP + phosphate + cellular proteinSide 2.. Functionally, part of the Sec protein translocase complex. Interacts with the SecYEG preprotein conducting channel. Has a central role in coupling the hydrolysis of ATP to the transfer of proteins into and across the cell membrane, serving as an ATP-driven molecular motor driving the stepwise translocation of polypeptide chains across the membrane. In Leuconostoc mesenteroides subsp. mesenteroides (strain ATCC 8293 / DSM 20343 / BCRC 11652 / CCM 1803 / JCM 6124 / NCDO 523 / NBRC 100496 / NCIMB 8023 / NCTC 12954 / NRRL B-1118 / 37Y), this protein is Protein translocase subunit SecA.